The primary structure comprises 190 residues: GTP cyclohydrolase 1 (190 aa).

The Zn(2+) site is built by C75, H78, and C146.

This sequence belongs to the GTP cyclohydrolase I family. Toroid-shaped homodecamer, composed of two pentamers of five dimers.

It carries out the reaction GTP + H2O = 7,8-dihydroneopterin 3'-triphosphate + formate + H(+). It functions in the pathway cofactor biosynthesis; 7,8-dihydroneopterin triphosphate biosynthesis; 7,8-dihydroneopterin triphosphate from GTP: step 1/1. The chain is GTP cyclohydrolase 1 from Campylobacter jejuni (strain RM1221).